We begin with the raw amino-acid sequence, 439 residues long: Keratin, type I cytoskeletal 40 (439 aa).

The tract at residues 1–89 (MASDGSPSCC…CEEGSFNSNE (89 aa)) is head. One can recognise an IF rod domain in the interval 89–400 (EKETMQFLND…GLLEKEDSRL (312 aa)). Positions 90–124 (KETMQFLNDRLASYLERVRSLEENNAELECRIREQ) are coil 1A. Positions 125 to 135 (CEPNAPLVCPD) are linker 1. Residues 136-236 (YQRYFDTIEE…HEEEVNLLRE (101 aa)) are coil 1B. The linker 12 stretch occupies residues 237–252 (QLGDRLSVELDTAPTV). The interval 253–396 (DLNKVLDEMR…NTYRGLLEKE (144 aa)) is coil 2. Residues 397–439 (DSRLPCNPGSGAPMPNSTCEPCSNSMCEPCSAYVICTVENCCA) are tail.

Belongs to the intermediate filament family. In terms of assembly, heterotetramer of two type I and two type II keratins.

Its function is as follows. May play a role in late hair differentiation. The protein is Keratin, type I cytoskeletal 40 (Krt40) of Mus musculus (Mouse).